The chain runs to 225 residues: ATP-dependent Clp protease proteolytic subunit (225 aa).

Catalysis depends on serine 123, which acts as the Nucleophile. Histidine 148 is an active-site residue.

Belongs to the peptidase S14 family. As to quaternary structure, fourteen ClpP subunits assemble into 2 heptameric rings which stack back to back to give a disk-like structure with a central cavity, resembling the structure of eukaryotic proteasomes.

The protein resides in the cytoplasm. It carries out the reaction Hydrolysis of proteins to small peptides in the presence of ATP and magnesium. alpha-casein is the usual test substrate. In the absence of ATP, only oligopeptides shorter than five residues are hydrolyzed (such as succinyl-Leu-Tyr-|-NHMec, and Leu-Tyr-Leu-|-Tyr-Trp, in which cleavage of the -Tyr-|-Leu- and -Tyr-|-Trp bonds also occurs).. Cleaves peptides in various proteins in a process that requires ATP hydrolysis. Has a chymotrypsin-like activity. Plays a major role in the degradation of misfolded proteins. This Chlorobium luteolum (strain DSM 273 / BCRC 81028 / 2530) (Pelodictyon luteolum) protein is ATP-dependent Clp protease proteolytic subunit.